The following is a 74-amino-acid chain: Acyl carrier protein (74 aa).

The 73-residue stretch at 1–73 (MAVFEKVQEI…DLVAYVEEKT (73 aa)) folds into the Carrier domain. S35 is modified (O-(pantetheine 4'-phosphoryl)serine).

It belongs to the acyl carrier protein (ACP) family. Post-translationally, 4'-phosphopantetheine is transferred from CoA to a specific serine of apo-ACP by AcpS. This modification is essential for activity because fatty acids are bound in thioester linkage to the sulfhydryl of the prosthetic group.

The protein resides in the cytoplasm. It participates in lipid metabolism; fatty acid biosynthesis. Carrier of the growing fatty acid chain in fatty acid biosynthesis. In Streptococcus thermophilus (strain CNRZ 1066), this protein is Acyl carrier protein.